The chain runs to 439 residues: MWVALKRFGFLSGLLALTVLSACSAFRKPDKFEGYYINNIPGSAEIDHANYDLTFFLGFFNRIEKTEKDKSQIDFGSIHGTGWLIDWKEVDKKDKKANKFTVYLATNLHVIQALKNREDHPPYNQFDINFVRTVDFRIGKYTDVKQFVAPSKLGLPNSTQAFVAAQPTVLPKTAFIAHDFVNYTLSKDQKNKKQREQQWKVQIKPNKDEVHPYADSAVLELPLFLNNSSDRQIFDHFIQPAIRAYKQLGDSLNIFAYPTLDQFKHSHYYVLGYPYIAKKLPTLFVNQTGKEKTVPGETAQIPNDQPFVSTINEEGPHLGRIKSDKFNGGTWAWNHDNTKNFPFNRQFRGKEYQMYGKGIGITNGSLSRGASGSLVLNNKRQIVAIYFASRITETQEWGLAQLLRWKPRSVLNEEKDSVAYDLIFGNSNTKKYYAQFAKK.

Residues 1–22 form the signal peptide; sequence MWVALKRFGFLSGLLALTVLSA. The N-palmitoyl cysteine moiety is linked to residue Cys-23. Cys-23 is lipidated: S-diacylglycerol cysteine.

The protein belongs to the MG067/MG068/MG395 family.

The protein resides in the cell membrane. This is an uncharacterized protein from Mycoplasma pneumoniae (strain ATCC 29342 / M129 / Subtype 1) (Mycoplasmoides pneumoniae).